A 633-amino-acid chain; its full sequence is CDK5 and ABL1 enzyme substrate 1 (633 aa).

Positions 1-29 (MAAAAAAATTAACSSGSAGTDAAGASGLQ) are enriched in low complexity. The segment at 1–99 (MAAAAAAATT…EGGAAKPGAG (99 aa)) is disordered. Residues 1–109 (MAAAAAAATT…GACGARTRFS (109 aa)) are interaction with TDRD7. Positions 51-61 (PPRKPRMDPRR) are enriched in basic and acidic residues. S168 and S287 each carry phosphoserine. The interaction with CDK3 stretch occupies residues 179 to 492 (QWQPPRPAPL…TTVIDYVKPS (314 aa)). At S313 the chain carries Phosphoserine; by CDK2 and CDK3. Position 415 is a phosphothreonine (T415).

It belongs to the cyclin family. In terms of assembly, found in a complex with p53/TP53. Found in a number of complexes with CDK2, CDK3, CDK5, ABL1, TDRD7, CDK17, CCNA1, CCNE1 and TP73. Interacts with CDK2, CDK3, CDK5, ABL1 and TDRD7. Phosphorylated on Ser-313 by CCNE1/CDK3. Phosphorylated on serine/threonine residues by CDK5 and on tyrosine residues by ABL1. Also phosphorylated in vitro by CCNA1/CDK2, CCNE1/CDK2, CCNA1/CDK3 and CCNE1/CDK3. Expressed in breast, pancreas, colon, head and neck (at protein level). Strongly decreased in more than half of cases of atypical endometrial hyperplasia and in more than 90% of endometrial cancers.

Its subcellular location is the nucleus. The protein localises to the cytoplasm. Its function is as follows. Cyclin-dependent kinase binding protein. Enhances cyclin-dependent kinase tyrosine phosphorylation by nonreceptor tyrosine kinases, such as that of CDK5 by activated ABL1, which leads to increased CDK5 activity and is critical for neuronal development, and that of CDK2 by WEE1, which leads to decreased CDK2 activity and growth inhibition. Positively affects neuronal outgrowth. Plays a role as a regulator for p53/p73-induced cell death. The chain is CDK5 and ABL1 enzyme substrate 1 (CABLES1) from Homo sapiens (Human).